Reading from the N-terminus, the 225-residue chain is 7-cyano-7-deazaguanine synthase (225 aa).

10 to 20 (VSGGLDSTTAL) contacts ATP. Zn(2+) is bound by residues Cys-189, Cys-199, Cys-202, and Cys-205.

This sequence belongs to the QueC family. It depends on Zn(2+) as a cofactor.

The enzyme catalyses 7-carboxy-7-deazaguanine + NH4(+) + ATP = 7-cyano-7-deazaguanine + ADP + phosphate + H2O + H(+). The protein operates within purine metabolism; 7-cyano-7-deazaguanine biosynthesis. Catalyzes the ATP-dependent conversion of 7-carboxy-7-deazaguanine (CDG) to 7-cyano-7-deazaguanine (preQ(0)). This chain is 7-cyano-7-deazaguanine synthase, found in Saccharophagus degradans (strain 2-40 / ATCC 43961 / DSM 17024).